The following is a 262-amino-acid chain: Small ribosomal subunit protein eS1 (262 aa).

The protein belongs to the eukaryotic ribosomal protein eS1 family. Component of the small ribosomal subunit. Mature ribosomes consist of a small (40S) and a large (60S) subunit. The 40S subunit contains about 32 different proteins and 1 molecule of RNA (18S). The 60S subunit contains about 42 different proteins and 3 molecules of RNA (28S, 5.8S and 5S).

The protein resides in the cytoplasm. Functionally, component of the ribosome, a large ribonucleoprotein complex responsible for the synthesis of proteins in the cell. The small ribosomal subunit (SSU) binds messenger RNAs (mRNAs) and translates the encoded message by selecting cognate aminoacyl-transfer RNA (tRNA) molecules. The large subunit (LSU) contains the ribosomal catalytic site termed the peptidyl transferase center (PTC), which catalyzes the formation of peptide bonds, thereby polymerizing the amino acids delivered by tRNAs into a polypeptide chain. The nascent polypeptides leave the ribosome through a tunnel in the LSU and interact with protein factors that function in enzymatic processing, targeting, and the membrane insertion of nascent chains at the exit of the ribosomal tunnel. The polypeptide is Small ribosomal subunit protein eS1 (Plasmodium falciparum (isolate 3D7)).